The following is a 519-amino-acid chain: Trichothecene 15-O-acetyltransferase TRI3 (519 aa).

Position 414 (H414) interacts with 15-deacetylcalonectrin.

This sequence belongs to the trichothecene O-acetyltransferase family.

It functions in the pathway sesquiterpene biosynthesis; trichothecene biosynthesis. Functionally, 15-O-acetyltransferase; part of the core gene cluster that mediates the biosynthesis of trichothecenes, a very large family of chemically related bicyclic sesquiterpene compounds acting as mycotoxins, including T2-toxin. The biosynthesis of trichothecenes begins with the cyclization of farnesyl diphosphate to trichodiene and is catalyzed by the trichodiene synthase TRI5. Trichodiene undergoes a series of oxygenations catalyzed by the cytochrome P450 monooxygenase TRI4. TRI4 controls the addition of four oxygens at C-2, C-3, C-11, and the C-12, C-13-epoxide to form the intermediate isotrichotriol. Isotrichotriol then undergoes a non-enzymatic isomerization and cyclization to form isotrichodermol. During this process, the oxygen at the C-2 position becomes the pyran ring oxygen and the hydroxyl group at C-11 is lost. More complex type A trichothecenes are built by modifying isotrichodermol through a series of paired hydroxylation and acetylation or acylation steps. Isotrichodermol is converted to isotrichodermin by the acetyltransferase TRI101. TRI101 encodes a C-3 transacetylase that acts as a self-protection or resistance factor during biosynthesis and that the presence of a free C-3 hydroxyl group is a key component of Fusarium trichothecene phytotoxicity. A second hydroxyl group is added to C-15 by the trichothecene C-15 hydroxylase TRI11, producing 15-decalonectrin, which is then acetylated by TRI3, producing calonectrin. A third hydroxyl group is added at C-4 by the cytochrome P450 monooxygenase TRI13, converting calonectrin to 3,15-diacetoxyspirpenol, which is subsequently acetylated by the acetyltransferase TRI7. A fourth hydroxyl group is added to C-8 by the cytochrome P450 monooxygenase TRI1, followed by the addition of an isovaleryl moiety by TRI16. Finally, the acetyl group is removed from the C-3 position by the trichothecene C-3 esterase TRI8 to produce T-2 toxin. This chain is Trichothecene 15-O-acetyltransferase TRI3, found in Fusarium sporotrichioides.